A 346-amino-acid chain; its full sequence is MHRFLFALDPEAAHGLALGLLALWSERGPLLEVPARLLRVEDPRLRVEAFGVSFPNPLGLAAGMDKDARALGAWWALGFGFAEVGTLTPRPQVGNPKPRLFRLVEDRALINRMGFNNRGAEEAARRLKRSRQRGLPLPIGVNLGKNRDTPLGRAAEDYLKALRLLEPFGDYFVLNVSSPNTPGLRALQEGPFLDELLARLRPATKKPLLLKVAPDLSPKALDEVLALAKKHRLQGLVAVNTTLAREGLKSPWAKEAGGLSGRPLKGRALEVLRHLAEGAEGLALVSVGGVETPLDLWERLKAGASLVQVYTGFVYGGPLFPRRLLLGLLRLMEAEGVSSLGELRRA.

Residues 62 to 66 and Thr-86 contribute to the FMN site; that span reads AGMDK. Lys-66 serves as a coordination point for substrate. 111 to 115 is a substrate binding site; it reads NRMGF. FMN-binding residues include Asn-142 and Asn-175. Asn-175 provides a ligand contact to substrate. The active-site Nucleophile is the Ser-178. Asn-180 contacts substrate. FMN contacts are provided by Lys-211 and Val-239. Substrate is bound at residue 240–241; it reads NT. Residues Gly-261, Gly-289, and 310-311 contribute to the FMN site; that span reads YT.

The protein belongs to the dihydroorotate dehydrogenase family. Type 2 subfamily. In terms of assembly, monomer. The cofactor is FMN.

The protein resides in the cell membrane. It carries out the reaction (S)-dihydroorotate + a quinone = orotate + a quinol. It functions in the pathway pyrimidine metabolism; UMP biosynthesis via de novo pathway; orotate from (S)-dihydroorotate (quinone route): step 1/1. Its function is as follows. Catalyzes the conversion of dihydroorotate to orotate with quinone as electron acceptor. This chain is Dihydroorotate dehydrogenase (quinone), found in Thermus thermophilus (strain ATCC 27634 / DSM 579 / HB8).